Reading from the N-terminus, the 508-residue chain is Photosystem II CP47 reaction center protein (508 aa).

Transmembrane regions (helical) follow at residues 21 to 36, 101 to 115, 140 to 156, 203 to 218, 237 to 252, and 457 to 472; these read SVHI…WAGS, IVFS…IWHW, GIHL…FGAF, IAAG…FHLS, VLSS…AFVV, and SFAL…HGSR.

It belongs to the PsbB/PsbC family. PsbB subfamily. As to quaternary structure, PSII is composed of 1 copy each of membrane proteins PsbA, PsbB, PsbC, PsbD, PsbE, PsbF, PsbH, PsbI, PsbJ, PsbK, PsbL, PsbM, PsbT, PsbX, PsbY, PsbZ, Psb30/Ycf12, at least 3 peripheral proteins of the oxygen-evolving complex and a large number of cofactors. It forms dimeric complexes. It depends on Binds multiple chlorophylls. PSII binds additional chlorophylls, carotenoids and specific lipids. as a cofactor.

It is found in the plastid. It localises to the chloroplast thylakoid membrane. Functionally, one of the components of the core complex of photosystem II (PSII). It binds chlorophyll and helps catalyze the primary light-induced photochemical processes of PSII. PSII is a light-driven water:plastoquinone oxidoreductase, using light energy to abstract electrons from H(2)O, generating O(2) and a proton gradient subsequently used for ATP formation. The sequence is that of Photosystem II CP47 reaction center protein from Helianthus annuus (Common sunflower).